Here is a 379-residue protein sequence, read N- to C-terminus: Alternative oxidase 1, mitochondrial (379 aa).

A compositionally biased stretch (low complexity) spans 33–50; that stretch reads TTTTSTKSRSSTSTAATT. A disordered region spans residues 33–76; it reads TTTTSTKSRSSTSTAATTVGNSNPKSPIDEDNLEKPGTIPTKHK. The Fe cation site is built by Glu-180, Glu-219, and His-222. Residues 234–256 form a helical membrane-spanning segment; it reads WFTRSIIYIGQGVFTNIFFLVYL. Fe cation-binding residues include Glu-270, Glu-271, Glu-326, and His-329.

The protein belongs to the alternative oxidase family. Fe cation is required as a cofactor.

Its subcellular location is the mitochondrion inner membrane. Its function is as follows. Catalyzes cyanide-resistant oxygen consumption. May increase respiration when the cytochrome respiratory pathway is restricted, or in response to low temperatures. This Candida albicans (Yeast) protein is Alternative oxidase 1, mitochondrial (AOX1).